Here is a 135-residue protein sequence, read N- to C-terminus: Large ribosomal subunit protein uL22 (135 aa).

It belongs to the universal ribosomal protein uL22 family. As to quaternary structure, part of the 50S ribosomal subunit.

Functionally, this protein binds specifically to 23S rRNA; its binding is stimulated by other ribosomal proteins, e.g. L4, L17, and L20. It is important during the early stages of 50S assembly. It makes multiple contacts with different domains of the 23S rRNA in the assembled 50S subunit and ribosome. The globular domain of the protein is located near the polypeptide exit tunnel on the outside of the subunit, while an extended beta-hairpin is found that lines the wall of the exit tunnel in the center of the 70S ribosome. The protein is Large ribosomal subunit protein uL22 of Malacoplasma penetrans (strain HF-2) (Mycoplasma penetrans).